A 289-amino-acid chain; its full sequence is Glucosamine-6-phosphate deaminase 1 (289 aa).

Position 64 is an N6-acetyllysine (K64). Catalysis depends on D72, which acts as the Proton acceptor; for enolization step. The active-site For ring-opening step is D141. H143 functions as the Proton acceptor; for ring-opening step in the catalytic mechanism. E148 serves as the catalytic For ring-opening step. T161 carries the phosphothreonine modification.

The protein belongs to the glucosamine/galactosamine-6-phosphate isomerase family. In terms of assembly, homohexamer. At the equatorial segment of the sperm head.

It is found in the cytoplasm. It carries out the reaction alpha-D-glucosamine 6-phosphate + H2O = beta-D-fructose 6-phosphate + NH4(+). It functions in the pathway nucleotide-sugar biosynthesis; UDP-N-acetyl-alpha-D-glucosamine biosynthesis; alpha-D-glucosamine 6-phosphate from D-fructose 6-phosphate: step 1/1. Allosterically activated by N-acetylglucosamine-6-phosphate (GlcNAc6P). Its function is as follows. Catalyzes the reversible conversion of alpha-D-glucosamine 6-phosphate (GlcN-6P) into beta-D-fructose 6-phosphate (Fru-6P) and ammonium ion, a regulatory reaction step in de novo uridine diphosphate-N-acetyl-alpha-D-glucosamine (UDP-GlcNAc) biosynthesis via hexosamine pathway. Deamination is coupled to aldo-keto isomerization mediating the metabolic flux from UDP-GlcNAc toward Fru-6P. At high ammonium level can drive amination and isomerization of Fru-6P toward hexosamines and UDP-GlcNAc synthesis. Has a role in fine tuning the metabolic fluctuations of cytosolic UDP-GlcNAc and their effects on hyaluronan synthesis that occur during tissue remodeling. Seems to trigger calcium oscillations in mammalian eggs. These oscillations serve as the essential trigger for egg activation and early development of the embryo. The polypeptide is Glucosamine-6-phosphate deaminase 1 (Mesocricetus auratus (Golden hamster)).